Consider the following 505-residue polypeptide: Amidophosphoribosyltransferase (505 aa).

Cysteine 2 acts as the Nucleophile in catalysis. Positions 2–236 (CGIVGIAGVM…PGEAIYITEE (235 aa)) constitute a Glutamine amidotransferase type-2 domain. Mg(2+) is bound by residues threonine 305, aspartate 367, and aspartate 368.

This sequence in the C-terminal section; belongs to the purine/pyrimidine phosphoribosyltransferase family. In terms of assembly, homotetramer. It depends on Mg(2+) as a cofactor.

It catalyses the reaction 5-phospho-beta-D-ribosylamine + L-glutamate + diphosphate = 5-phospho-alpha-D-ribose 1-diphosphate + L-glutamine + H2O. Its pathway is purine metabolism; IMP biosynthesis via de novo pathway; N(1)-(5-phospho-D-ribosyl)glycinamide from 5-phospho-alpha-D-ribose 1-diphosphate: step 1/2. Its activity is regulated as follows. Inhibited by iodoacetamide and by the glutamine analogs chloroketone and DON. Functionally, catalyzes the formation of phosphoribosylamine from phosphoribosylpyrophosphate (PRPP) and glutamine. Can also use NH(3) in place of glutamine. The chain is Amidophosphoribosyltransferase from Escherichia coli (strain K12).